A 184-amino-acid polypeptide reads, in one-letter code: uncharacterized protein (184 aa).

Belongs to the TorD/DmsD family.

This is an uncharacterized protein from Haemophilus influenzae (strain ATCC 51907 / DSM 11121 / KW20 / Rd).